Here is a 370-residue protein sequence, read N- to C-terminus: MSAIMKSLCFSFLILASFATFFSVADAWRFNVGGNGAWVTNPQENYNTWAERNRFQVNDSLYFKYAKGSDSVQQVMKADFDGCNVRNPIKNFENGESVVTLDRSGAFYFISGNQDHCQKGQKLIVVVLAVRNQPSAPAHSPVPSVSPTQPPKSHSPVSPVAPASAPSKSQPPRSSVSPAQPPKSSSPISHTPALSPSHATSHSPATPSPSPKSPSPVSHSPSHSPAHTPSHSPAHTPSHSPAHAPSHSPAHAPSHSPAHAPSHSPAHSPSHSPATPKSPSPSSSPAQSPATPSPMTPQSPSPVSSPSPDQSAAPSDQSTPLAPSPSETTPTADNITAPAPSPRTNSASGLAVTSVMSTLFSATFTFLMFA.

A signal peptide spans 1 to 27; sequence MSAIMKSLCFSFLILASFATFFSVADA. The Phytocyanin domain occupies 28–129; sequence WRFNVGGNGA…GQKLIVVVLA (102 aa). N-linked (GlcNAc...) asparagine glycosylation is present at N58. A disulfide bridge connects residues C83 and C117. The segment covering 135 to 175 has biased composition (low complexity); that stretch reads SAPAHSPVPSVSPTQPPKSHSPVSPVAPASAPSKSQPPRSS. The interval 135–347 is disordered; it reads SAPAHSPVPS…PAPSPRTNSA (213 aa). The segment covering 176 to 194 has biased composition (polar residues); the sequence is VSPAQPPKSSSPISHTPAL. 2 stretches are compositionally biased toward low complexity: residues 195–205 and 215–290; these read SPSHATSHSPA and SPVS…QSPA. Residues 291–305 are compositionally biased toward pro residues; the sequence is TPSPMTPQSPSPVSS. A compositionally biased stretch (low complexity) spans 306–318; the sequence is PSPDQSAAPSDQS. Polar residues predominate over residues 319–334; sequence TPLAPSPSETTPTADN. The N-linked (GlcNAc...) asparagine glycan is linked to N334. Residue N345 is the site of GPI-anchor amidated asparagine attachment. Positions 346-370 are cleaved as a propeptide — removed in mature form; sequence SASGLAVTSVMSTLFSATFTFLMFA.

This sequence belongs to the early nodulin-like (ENODL) family. Mostly expressed in stems, leaves and flowers, and, to a lower extent, in seedlings, roots and seeds.

The protein localises to the cell membrane. Functionally, may act as a carbohydrate transporter. This is Early nodulin-like protein 1 from Arabidopsis thaliana (Mouse-ear cress).